The chain runs to 170 residues: MSKNVGKLVKIWNESEVLVDRKSKFQARCCPLQNQKDIPSILQELTQNNKSVSKASHMHMYAWRTAEVSNNLHLQQEQKKKGNKANKSNNSHVNKSRNITVQPKNIEQGCADCGEAGAGQRLLTLLERANIFNVLVIVTRWYGGTPLGSSRFRHISTCAVETLKKGGFLP.

The tract at residues 79–98 (KKKGNKANKSNNSHVNKSRN) is disordered.

It belongs to the IMPACT family.

In Saccharomyces cerevisiae (strain ATCC 204508 / S288c) (Baker's yeast), this protein is IMPACT family member YDL177C.